The primary structure comprises 335 residues: Anthranilate phosphoribosyltransferase (335 aa).

5-phospho-alpha-D-ribose 1-diphosphate-binding positions include Gly-80, 83-84, Thr-88, 90-93, 108-116, and Ser-120; these read GD, NIST, and KHGNRAVSS. Residue Gly-80 participates in anthranilate binding. A Mg(2+)-binding site is contributed by Ser-92. Asn-111 contributes to the anthranilate binding site. Arg-166 provides a ligand contact to anthranilate. Residues Asp-225 and Glu-226 each contribute to the Mg(2+) site.

The protein belongs to the anthranilate phosphoribosyltransferase family. As to quaternary structure, homodimer. Requires Mg(2+) as cofactor.

The enzyme catalyses N-(5-phospho-beta-D-ribosyl)anthranilate + diphosphate = 5-phospho-alpha-D-ribose 1-diphosphate + anthranilate. It functions in the pathway amino-acid biosynthesis; L-tryptophan biosynthesis; L-tryptophan from chorismate: step 2/5. Its function is as follows. Catalyzes the transfer of the phosphoribosyl group of 5-phosphorylribose-1-pyrophosphate (PRPP) to anthranilate to yield N-(5'-phosphoribosyl)-anthranilate (PRA). The sequence is that of Anthranilate phosphoribosyltransferase from Clostridium kluyveri (strain NBRC 12016).